The sequence spans 396 residues: 1-deoxy-D-xylulose 5-phosphate reductoisomerase (396 aa).

NADPH-binding residues include threonine 10, glycine 11, serine 12, isoleucine 13, asparagine 38, and asparagine 123. Lysine 124 contributes to the 1-deoxy-D-xylulose 5-phosphate binding site. Residue glutamate 125 coordinates NADPH. A Mn(2+)-binding site is contributed by aspartate 149. Residues serine 150, glutamate 151, serine 185, and histidine 208 each contribute to the 1-deoxy-D-xylulose 5-phosphate site. Glutamate 151 contributes to the Mn(2+) binding site. An NADPH-binding site is contributed by glycine 214. 1-deoxy-D-xylulose 5-phosphate-binding residues include serine 221, asparagine 226, lysine 227, and glutamate 230. Mn(2+) is bound at residue glutamate 230.

This sequence belongs to the DXR family. Requires Mg(2+) as cofactor. It depends on Mn(2+) as a cofactor.

The enzyme catalyses 2-C-methyl-D-erythritol 4-phosphate + NADP(+) = 1-deoxy-D-xylulose 5-phosphate + NADPH + H(+). It participates in isoprenoid biosynthesis; isopentenyl diphosphate biosynthesis via DXP pathway; isopentenyl diphosphate from 1-deoxy-D-xylulose 5-phosphate: step 1/6. In terms of biological role, catalyzes the NADPH-dependent rearrangement and reduction of 1-deoxy-D-xylulose-5-phosphate (DXP) to 2-C-methyl-D-erythritol 4-phosphate (MEP). The sequence is that of 1-deoxy-D-xylulose 5-phosphate reductoisomerase from Shewanella halifaxensis (strain HAW-EB4).